A 296-amino-acid chain; its full sequence is Ribosomal protein L11 methyltransferase (296 aa).

Residues T145, G166, D188, and N230 each contribute to the S-adenosyl-L-methionine site.

This sequence belongs to the methyltransferase superfamily. PrmA family.

It localises to the cytoplasm. It catalyses the reaction L-lysyl-[protein] + 3 S-adenosyl-L-methionine = N(6),N(6),N(6)-trimethyl-L-lysyl-[protein] + 3 S-adenosyl-L-homocysteine + 3 H(+). Methylates ribosomal protein L11. The protein is Ribosomal protein L11 methyltransferase of Histophilus somni (strain 129Pt) (Haemophilus somnus).